The primary structure comprises 244 residues: Claudin-12 (244 aa).

Residues 1–10 (MGCRDVHAAT) are Cytoplasmic-facing. A helical membrane pass occupies residues 11-31 (VLSFLCGIASVAGLFAGTLLP). Topologically, residues 32-87 (NWRKLRLITFNRNEKNLTIYTGLWVKCARYDGSSDCLMYDRTWYLSVDQLDLRVLQ) are extracellular. The chain crosses the membrane as a helical span at residues 88–108 (FALPLSIVIAMGALLLCLIGM). The Cytoplasmic segment spans residues 109–135 (CNTAFNSSVPNIKLAKCLVNSAGCHLV). The chain crosses the membrane as a helical span at residues 136–156 (AGLLFFLAGTVSLSPSIWAIF). The Extracellular portion of the chain corresponds to 157–174 (YNSHLNRKFEPVFTFDYA). A helical membrane pass occupies residues 175 to 195 (VFVTIASSGGLFMTALLLFVW). The Cytoplasmic segment spans residues 196–244 (YCACKSLSSPFWQPLYSHAPGMHTYSQPYSSRSRLSAIEIDIPVVSHST). A phosphoserine mark is found at S228 and S231.

Belongs to the claudin family. Interacts with OCLN.

The protein resides in the cell junction. It is found in the tight junction. Its subcellular location is the cell membrane. Plays a major role in tight junction-specific obliteration of the intercellular space, through calcium-independent cell-adhesion activity. This chain is Claudin-12 (Cldn12), found in Mus musculus (Mouse).